A 309-amino-acid chain; its full sequence is Homoserine kinase (309 aa).

85 to 95 (PYGLGLGSSGS) contributes to the ATP binding site.

This sequence belongs to the GHMP kinase family. Homoserine kinase subfamily.

It localises to the cytoplasm. The catalysed reaction is L-homoserine + ATP = O-phospho-L-homoserine + ADP + H(+). It participates in amino-acid biosynthesis; L-threonine biosynthesis; L-threonine from L-aspartate: step 4/5. Catalyzes the ATP-dependent phosphorylation of L-homoserine to L-homoserine phosphate. The chain is Homoserine kinase from Thermoplasma volcanium (strain ATCC 51530 / DSM 4299 / JCM 9571 / NBRC 15438 / GSS1).